The primary structure comprises 240 residues: UDP-2,3-diacylglucosamine hydrolase (240 aa).

Mn(2+) contacts are provided by aspartate 8, histidine 10, aspartate 41, asparagine 79, and histidine 114. 79–80 contributes to the substrate binding site; the sequence is NR. Aspartate 122, serine 160, asparagine 164, lysine 167, and histidine 195 together coordinate substrate. Mn(2+) contacts are provided by histidine 195 and histidine 197.

This sequence belongs to the LpxH family. Requires Mn(2+) as cofactor.

It is found in the cell inner membrane. It catalyses the reaction UDP-2-N,3-O-bis[(3R)-3-hydroxytetradecanoyl]-alpha-D-glucosamine + H2O = 2-N,3-O-bis[(3R)-3-hydroxytetradecanoyl]-alpha-D-glucosaminyl 1-phosphate + UMP + 2 H(+). Its pathway is glycolipid biosynthesis; lipid IV(A) biosynthesis; lipid IV(A) from (3R)-3-hydroxytetradecanoyl-[acyl-carrier-protein] and UDP-N-acetyl-alpha-D-glucosamine: step 4/6. Functionally, hydrolyzes the pyrophosphate bond of UDP-2,3-diacylglucosamine to yield 2,3-diacylglucosamine 1-phosphate (lipid X) and UMP by catalyzing the attack of water at the alpha-P atom. Involved in the biosynthesis of lipid A, a phosphorylated glycolipid that anchors the lipopolysaccharide to the outer membrane of the cell. This Salmonella arizonae (strain ATCC BAA-731 / CDC346-86 / RSK2980) protein is UDP-2,3-diacylglucosamine hydrolase.